Consider the following 464-residue polypeptide: Cyclin-dependent kinase 8 (464 aa).

Residues 1–15 (MDYDFKVKLTGERER) form an interaction with CCNC region. The Protein kinase domain maps to 21 to 335 (EYEGCKVGRG…SEQAMQDPYF (315 aa)). Residues 27-35 (VGRGTYGHV) and lysine 52 contribute to the ATP site. Catalysis depends on aspartate 151, which acts as the Proton acceptor. Residues 361–464 (EEEPDDKGDK…PQYSHQTHRY (104 aa)) form a disordered region. A compositionally biased stretch (low complexity) spans 373-391 (QQQQQGNNHTNGTGHPGNQ). Polar residues-rich tracts occupy residues 409-426 (PTTT…QRSN) and 434-446 (PGPS…SSMG). Residues 447-464 (YSSTSQQPPQYSHQTHRY) show a composition bias toward low complexity.

It belongs to the protein kinase superfamily. CMGC Ser/Thr protein kinase family. CDC2/CDKX subfamily. As to quaternary structure, component of the Mediator complex. Interacts with ccnc. It depends on Mg(2+) as a cofactor.

The protein localises to the nucleus. It carries out the reaction L-seryl-[protein] + ATP = O-phospho-L-seryl-[protein] + ADP + H(+). The catalysed reaction is L-threonyl-[protein] + ATP = O-phospho-L-threonyl-[protein] + ADP + H(+). The enzyme catalyses [DNA-directed RNA polymerase] + ATP = phospho-[DNA-directed RNA polymerase] + ADP + H(+). In terms of biological role, component of the Mediator complex, a coactivator involved in regulated gene transcription of nearly all RNA polymerase II-dependent genes. Mediator functions as a bridge to convey information from gene-specific regulatory proteins to the basal RNA polymerase II transcription machinery. Mediator is recruited to promoters by direct interactions with regulatory proteins and serves as a scaffold for the assembly of a functional pre-initiation complex with RNA polymerase II and the general transcription factors. Phosphorylates the CTD (C-terminal domain) of the large subunit of RNA polymerase II (RNAp II), which may inhibit the formation of a transcription initiation complex. The protein is Cyclin-dependent kinase 8 (cdk8) of Xenopus tropicalis (Western clawed frog).